A 776-amino-acid chain; its full sequence is Ankyrin repeat and EF-hand domain-containing protein 1 (776 aa).

4 ANK repeats span residues 47–76, 184–213, 217–246, and 250–279; these read NGLS…HPDV, TGRT…EVNA, DRHH…DVGL, and NGNT…DLKW. The EF-hand domain occupies 335-369; that stretch reads EREAFLREAFAVLDRGDGSISKNDFVMVLEERQDY. ANK repeat units follow at residues 524 to 553, 557 to 586, 590 to 619, and 623 to 652; these read YYKT…NVNA, FLWT…LIDA, NNST…KFQL, and KGHS…NLPK.

This chain is Ankyrin repeat and EF-hand domain-containing protein 1 (ANKEF1), found in Homo sapiens (Human).